The following is a 394-amino-acid chain: Elongation factor Tu 2 (394 aa).

The tr-type G domain maps to 10 to 204 (KPHVNVGTIG…ALDSYIPQPE (195 aa)). The G1 stretch occupies residues 19 to 26 (GHVDHGKT). 19-26 (GHVDHGKT) contributes to the GTP binding site. Threonine 26 contributes to the Mg(2+) binding site. Positions 60–64 (GITIN) are G2. A G3 region spans residues 81–84 (DCPG). GTP contacts are provided by residues 81 to 85 (DCPGH) and 136 to 139 (NKCD). The G4 stretch occupies residues 136-139 (NKCD). The G5 stretch occupies residues 174-176 (SAL).

The protein belongs to the TRAFAC class translation factor GTPase superfamily. Classic translation factor GTPase family. EF-Tu/EF-1A subfamily. As to quaternary structure, monomer.

The protein resides in the cytoplasm. The enzyme catalyses GTP + H2O = GDP + phosphate + H(+). GTP hydrolase that promotes the GTP-dependent binding of aminoacyl-tRNA to the A-site of ribosomes during protein biosynthesis. In Yersinia pestis bv. Antiqua (strain Antiqua), this protein is Elongation factor Tu 2.